Consider the following 340-residue polypeptide: Immunoglobulin-binding protein 1 (340 aa).

The region spanning 47-61 (LELLEKAAGMLSQLD) is the UIM domain. The interaction with PPP2CA stretch occupies residues 99-203 (RLDHLQRARE…HLLHLRRWIA (105 aa)). 2 disordered regions span residues 223–242 (DSPREETACHSSLPEKPPMK) and 291–340 (SADF…QNMG). Residues 226–291 (REETACHSSL…PDRGIAKPAS (66 aa)) are interaction with MID1. Lys-242 bears the N6-acetyllysine mark. Low complexity predominate over residues 292 to 301 (ADFQRAAQQQ). Over residues 302-312 (EDQEQKDEESE) the composition is skewed to acidic residues. Residues 313-330 (EKALHRMREWDDWKDTHP) are compositionally biased toward basic and acidic residues.

Belongs to the IGBP1/TAP42 family. In terms of assembly, interacts with PPP2CB, and with PP4 and PP6. Interacts with MID2. Interacts with ubiquitin. Interacts with partially folded PPP2CA, but not with the fully active protein. Interacts with MID1. Phosphorylated. Post-translationally, monoubiquitination by MID1 triggers calpain-mediated cleavage and switches IGBP1 activity from protective to destructive. In terms of tissue distribution, expressed in spleen, thymus, liver and brain. Ubiquitously expressed in B lineage cell lines.

It is found in the cytoplasm. Its function is as follows. Associated to surface IgM-receptor; may be involved in signal transduction. Involved in regulation of the catalytic activity of the phosphatases PP2A, PP4 and PP6 by protecting their partially folded catalytic subunits from degradative polyubiquitination until they associate with regulatory subunits. The sequence is that of Immunoglobulin-binding protein 1 (Igbp1) from Mus musculus (Mouse).